A 366-amino-acid polypeptide reads, in one-letter code: Ribosomal RNA large subunit methyltransferase M (366 aa).

S-adenosyl-L-methionine-binding positions include serine 188, 221 to 224 (CPGG), aspartate 240, aspartate 260, and aspartate 277. Lysine 306 functions as the Proton acceptor in the catalytic mechanism.

Belongs to the class I-like SAM-binding methyltransferase superfamily. RNA methyltransferase RlmE family. RlmM subfamily. In terms of assembly, monomer.

The protein localises to the cytoplasm. It catalyses the reaction cytidine(2498) in 23S rRNA + S-adenosyl-L-methionine = 2'-O-methylcytidine(2498) in 23S rRNA + S-adenosyl-L-homocysteine + H(+). Functionally, catalyzes the 2'-O-methylation at nucleotide C2498 in 23S rRNA. This Salmonella newport (strain SL254) protein is Ribosomal RNA large subunit methyltransferase M.